The sequence spans 209 residues: Pyridoxine/pyridoxamine 5'-phosphate oxidase (209 aa).

Residues 5-8 (REEY) and lysine 63 contribute to the substrate site. FMN-binding positions include 58 to 63 (RVVLLK), 73 to 74 (FT), arginine 79, lysine 80, and glutamine 102. Tyrosine 120, arginine 124, and serine 128 together coordinate substrate. Residues 137 to 138 (QS) and tryptophan 181 each bind FMN. A substrate-binding site is contributed by 187–189 (RLH). Arginine 191 contacts FMN.

It belongs to the pyridoxamine 5'-phosphate oxidase family. As to quaternary structure, homodimer. The cofactor is FMN.

The catalysed reaction is pyridoxamine 5'-phosphate + O2 + H2O = pyridoxal 5'-phosphate + H2O2 + NH4(+). The enzyme catalyses pyridoxine 5'-phosphate + O2 = pyridoxal 5'-phosphate + H2O2. It functions in the pathway cofactor metabolism; pyridoxal 5'-phosphate salvage; pyridoxal 5'-phosphate from pyridoxamine 5'-phosphate: step 1/1. It participates in cofactor metabolism; pyridoxal 5'-phosphate salvage; pyridoxal 5'-phosphate from pyridoxine 5'-phosphate: step 1/1. Catalyzes the oxidation of either pyridoxine 5'-phosphate (PNP) or pyridoxamine 5'-phosphate (PMP) into pyridoxal 5'-phosphate (PLP). This is Pyridoxine/pyridoxamine 5'-phosphate oxidase from Alcanivorax borkumensis (strain ATCC 700651 / DSM 11573 / NCIMB 13689 / SK2).